Consider the following 120-residue polypeptide: MTMTRRRRGQIGEAAAAALLADSGYRILERNYRCPLGEIDIVAAQGEEIVFIEVRTRSSQTFGTPQESVDGRKRLRLRRLAAYYLGSRGLAGRSCRFDVVAVWLDRQERVAGVEVIKGAF.

The protein belongs to the UPF0102 family.

The protein is UPF0102 protein Moth_0988 of Moorella thermoacetica (strain ATCC 39073 / JCM 9320).